The chain runs to 394 residues: Fructose-bisphosphate aldolase, chloroplastic (394 aa).

Residues 1–46 (MASASLLKTSPVLDNPEFLKGQTLRIPSVAGVRFTPSGSSSLTVRA) constitute a chloroplast transit peptide. Residues R93 and K183 each coordinate substrate. E223 (proton acceptor) is an active-site residue. K265 functions as the Schiff-base intermediate with dihydroxyacetone-P in the catalytic mechanism.

Belongs to the class I fructose-bisphosphate aldolase family.

The protein localises to the plastid. Its subcellular location is the chloroplast. The catalysed reaction is beta-D-fructose 1,6-bisphosphate = D-glyceraldehyde 3-phosphate + dihydroxyacetone phosphate. It functions in the pathway carbohydrate degradation; glycolysis; D-glyceraldehyde 3-phosphate and glycerone phosphate from D-glucose: step 4/4. The chain is Fructose-bisphosphate aldolase, chloroplastic from Spinacia oleracea (Spinach).